The chain runs to 459 residues: Bifunctional protein GlmU (459 aa).

Residues 1–228 form a pyrophosphorylase region; that stretch reads MNFKAIILAA…IEELMGVNSR (228 aa). Residues 8 to 11, Lys22, Gln72, and 77 to 78 each bind UDP-N-acetyl-alpha-D-glucosamine; these read LAAG and GT. Residue Asp101 coordinates Mg(2+). UDP-N-acetyl-alpha-D-glucosamine is bound by residues Gly138, Glu153, Asn168, and Asn226. Residue Asn226 coordinates Mg(2+). The tract at residues 229 to 249 is linker; the sequence is VELSKAEEIMRRRINESHMVN. Residues 250 to 459 are N-acetyltransferase; sequence GVTIIDTNST…KKNQKDDQSK (210 aa). 2 residues coordinate UDP-N-acetyl-alpha-D-glucosamine: Arg331 and Lys349. His361 serves as the catalytic Proton acceptor. UDP-N-acetyl-alpha-D-glucosamine-binding residues include Tyr364 and Asn375. Acetyl-CoA-binding positions include 384–385, Ser403, Thr421, and Arg438; that span reads NY.

It in the N-terminal section; belongs to the N-acetylglucosamine-1-phosphate uridyltransferase family. The protein in the C-terminal section; belongs to the transferase hexapeptide repeat family. Homotrimer. Mg(2+) is required as a cofactor.

It is found in the cytoplasm. It carries out the reaction alpha-D-glucosamine 1-phosphate + acetyl-CoA = N-acetyl-alpha-D-glucosamine 1-phosphate + CoA + H(+). The enzyme catalyses N-acetyl-alpha-D-glucosamine 1-phosphate + UTP + H(+) = UDP-N-acetyl-alpha-D-glucosamine + diphosphate. The protein operates within nucleotide-sugar biosynthesis; UDP-N-acetyl-alpha-D-glucosamine biosynthesis; N-acetyl-alpha-D-glucosamine 1-phosphate from alpha-D-glucosamine 6-phosphate (route II): step 2/2. Its pathway is nucleotide-sugar biosynthesis; UDP-N-acetyl-alpha-D-glucosamine biosynthesis; UDP-N-acetyl-alpha-D-glucosamine from N-acetyl-alpha-D-glucosamine 1-phosphate: step 1/1. It functions in the pathway bacterial outer membrane biogenesis; LPS lipid A biosynthesis. Catalyzes the last two sequential reactions in the de novo biosynthetic pathway for UDP-N-acetylglucosamine (UDP-GlcNAc). The C-terminal domain catalyzes the transfer of acetyl group from acetyl coenzyme A to glucosamine-1-phosphate (GlcN-1-P) to produce N-acetylglucosamine-1-phosphate (GlcNAc-1-P), which is converted into UDP-GlcNAc by the transfer of uridine 5-monophosphate (from uridine 5-triphosphate), a reaction catalyzed by the N-terminal domain. This is Bifunctional protein GlmU from Clostridioides difficile (strain 630) (Peptoclostridium difficile).